Here is a 274-residue protein sequence, read N- to C-terminus: 5'-3' exoribonuclease (274 aa).

H8, H10, D15, H40, E65, H76, H190, D247, and H249 together coordinate Mn(2+).

Belongs to the PHP family. TrpH/YciV subfamily. It depends on Mn(2+) as a cofactor.

It catalyses the reaction a ribonucleoside 3',5'-bisphosphate + H2O = a ribonucleoside 5'-phosphate + phosphate. In terms of biological role, efficiently catalyzes the hydrolysis of the 3'-phosphate from 3',5'-bis-phosphonucleotides as well as the successive hydrolysis of 5'-phosphomononucleotides from the 5'-end of short pieces of RNA and DNA, with no specificity toward the identity of the nucleotide base. Is more efficient at hydrolyzing RNA oligonucleotides than DNA oligonucleotides. This enzyme can also hydrolyze annealed DNA duplexes, albeit at a catalytic efficiency lower than that of the corresponding single-stranded oligonucleotides. This Haemophilus influenzae (strain ATCC 51907 / DSM 11121 / KW20 / Rd) protein is 5'-3' exoribonuclease.